Consider the following 306-residue polypeptide: Ribonuclease Z (306 aa).

Zn(2+)-binding residues include histidine 63, histidine 65, aspartate 67, histidine 68, histidine 141, aspartate 211, and histidine 269. The active-site Proton acceptor is the aspartate 67.

This sequence belongs to the RNase Z family. In terms of assembly, homodimer. Requires Zn(2+) as cofactor.

The enzyme catalyses Endonucleolytic cleavage of RNA, removing extra 3' nucleotides from tRNA precursor, generating 3' termini of tRNAs. A 3'-hydroxy group is left at the tRNA terminus and a 5'-phosphoryl group is left at the trailer molecule.. Its function is as follows. Zinc phosphodiesterase, which displays some tRNA 3'-processing endonuclease activity. Probably involved in tRNA maturation, by removing a 3'-trailer from precursor tRNA. This is Ribonuclease Z from Staphylococcus epidermidis (strain ATCC 12228 / FDA PCI 1200).